The primary structure comprises 637 residues: MAAMAVGGAGGSRVSSGRDLNCVPEIADTLGAVAKQGFDFLCMPVFHPRFKREFIQEPAKNRPGPQTRSDLLLSGRDWNTLIVGKLSPWIRPDSKVEKIRRNSEAAMLQELNFGAYLGLPAFLLPLNQEDNTNLARVLTNHIHTGHHSSMFWMRVPLVAPEDLRDDIIENAPTTHTEEYSGEEKTWMWWHNFRTLCDYSKRIAVALEIGADLPSNHVIDRWLGEPIKAAILPTSIFLTNKKGFPVLSKMHQRLIFRLLKLEVQFIITGTNHHSEKEFCSYLQYLEYLSQNRPPPNAYELFAKGYEDYLQSPLQPLMDNLESQTYEVFEKDPIKYSQYQQAIYKCLLDRVPEEEKDTNVQVLMVLGAGRGPLVNASLRAAKQADRRIKLYAVEKNPNAVVTLENWQFEEWGSQVTVVSSDMREWVAPEKADIIVSELLGSFADNELSPECLDGAQHFLKDDGVSIPGEYTSFLAPISSSKLYNEVRACREKDRDPEAQFEMPYVVRLHNFHQLSAPQPCFTFSHPNRDPMIDNNRYCTLEFPVEVNTVLHGFAGYFETVLYQDITLSIRPETHSPGMFSWFPILFPIKQPITVREGQTICVRFWRCSNSKKVWYEWAVTAPVCSAIHNPTGRSYTIGL.

A2 bears the N-acetylalanine; in Protein arginine N-methyltransferase 5, N-terminally processed mark. A TIM barrel region spans residues 13-292 (RVSSGRDLNC…YLEYLSQNRP (280 aa)). Positions 308–615 (LQSPLQPLMD…SNSKKVWYEW (308 aa)) constitute an SAM-dependent MTase PRMT-type domain. Y324 serves as a coordination point for S-adenosyl-L-methionine. An a protein-binding site is contributed by F327. Residues 333 to 334 (KY), E392, and 419 to 420 (DM) contribute to the S-adenosyl-L-methionine site. Residues E435 and E444 each contribute to the a protein site. Residues E435 and E444 each act as proton donor/acceptor in the active site. A beta barrel region spans residues 465–637 (PGEYTSFLAP…PTGRSYTIGL (173 aa)). The segment at 488 to 494 (REKDRDP) is dimerization.

The protein belongs to the class I-like SAM-binding methyltransferase superfamily. Protein arginine N-methyltransferase family. Forms, at least, homodimers and homotetramers. Component of the methylosome complex, composed of PRMT5, WDR77 and CLNS1A. Found in a complex composed of PRMT5, WDR77 and RIOK1. RIOK1 and CLNS1A associate with PRMT5 in a mutually exclusive fashion, which allows the recruitment of distinct methylation substrates, such as nucleolin/NCL and Sm proteins, respectively. Interacts with PRDM1. Identified in a complex composed of methylosome and PRMT1 and ERH. Interacts with EGFR; methylates EGFR and stimulates EGFR-mediated ERK activation. Interacts with HOXA9. Interacts with SRGAP2. Found in a complex with COPRS, RUNX1 and CBFB. Interacts with CHTOP; the interaction symmetrically methylates CHTOP, but seems to require the presence of PRMT1. Interacts with EPB41L3; this modulates methylation of target proteins. Component of a high molecular weight E2F-pocket protein complex, CERC (cyclin E1 repressor complex). Associates with SWI/SNF remodeling complexes containing SMARCA2 and SMARCA4. Interacts with JAK2, SSTR1, SUPT5H, BRAF and with active RAF1. Interacts with LSM11, PRMT7 and SNRPD3. Interacts with COPRS; promoting its recruitment on histone H4. Interacts with CLNS1A/pICln. Identified in a complex with CLNS1A/pICln and Sm proteins. Interacts with RPS10. Interacts with WDR77. Interacts with IWS1. Interacts with CRY1. Interacts with POLR2A. Interacts with SMN1/SMN2. Interacts with LYAR; this interaction is direct. Interacts with TTC5/STRAP; this interaction is DNA damage-dependent and promotes PRMT5 interaction with p53/TP53. Interacts with p53/TP53 in response to DNA damage; the interaction is TTC5/STRAP dependent. Interacts with FAM47E; the interaction is direct, promotes PRMT5 localization to chromatin, and does not disrupt its association with WDR77 or STUB1. Interacts with TDRD6. Interacts with STUB1. Interacts with MBD2. Does not interact with MBD3. Ubiquitous.

It localises to the cytoplasm. It is found in the nucleus. Its subcellular location is the chromosome. The protein resides in the golgi apparatus. The enzyme catalyses L-arginyl-[protein] + 2 S-adenosyl-L-methionine = N(omega),N(omega)'-dimethyl-L-arginyl-[protein] + 2 S-adenosyl-L-homocysteine + 2 H(+). With respect to regulation, activity is increased by EGF, HGF, FGF1 or FGF2 treatments, and slightly decreased by NGF treatment. In terms of biological role, arginine methyltransferase that can both catalyze the formation of omega-N monomethylarginine (MMA) and symmetrical dimethylarginine (sDMA), with a preference for the formation of MMA. Specifically mediates the symmetrical dimethylation of arginine residues in the small nuclear ribonucleoproteins Sm D1 (SNRPD1) and Sm D3 (SNRPD3); such methylation being required for the assembly and biogenesis of snRNP core particles. Methylates SUPT5H and may regulate its transcriptional elongation properties. May methylate the N-terminal region of MBD2. Mono- and dimethylates arginine residues of myelin basic protein (MBP) in vitro. May play a role in cytokine-activated transduction pathways. Negatively regulates cyclin E1 promoter activity and cellular proliferation. Methylates histone H2A and H4 'Arg-3' during germ cell development. Methylates histone H3 'Arg-8', which may repress transcription. Methylates the Piwi proteins (PIWIL1, PIWIL2 and PIWIL4), methylation of Piwi proteins being required for the interaction with Tudor domain-containing proteins and subsequent localization to the meiotic nuage. Methylates RPS10. Attenuates EGF signaling through the MAPK1/MAPK3 pathway acting at 2 levels. First, monomethylates EGFR; this enhances EGFR 'Tyr-1197' phosphorylation and PTPN6 recruitment, eventually leading to reduced SOS1 phosphorylation. Second, methylates RAF1 and probably BRAF, hence destabilizing these 2 signaling proteins and reducing their catalytic activity. Required for induction of E-selectin and VCAM-1, on the endothelial cells surface at sites of inflammation. Methylates HOXA9. Methylates and regulates SRGAP2 which is involved in cell migration and differentiation. Acts as a transcriptional corepressor in CRY1-mediated repression of the core circadian component PER1 by regulating the H4R3 dimethylation at the PER1 promoter. Methylates GM130/GOLGA2, regulating Golgi ribbon formation. Methylates H4R3 in genes involved in glioblastomagenesis in a CHTOP- and/or TET1-dependent manner. Symmetrically methylates POLR2A, a modification that allows the recruitment to POLR2A of proteins including SMN1/SMN2 and SETX. This is required for resolving RNA-DNA hybrids created by RNA polymerase II, that form R-loop in transcription terminal regions, an important step in proper transcription termination. Along with LYAR, binds the promoter of gamma-globin HBG1/HBG2 and represses its expression. Symmetrically methylates NCL. Methylates p53/TP53; methylation might possibly affect p53/TP53 target gene specificity. Involved in spliceosome maturation and mRNA splicing in prophase I spermatocytes through the catalysis of the symmetrical arginine dimethylation of SNRPB (small nuclear ribonucleoprotein-associated protein) and the interaction with tudor domain-containing protein TDRD6. This Homo sapiens (Human) protein is Protein arginine N-methyltransferase 5 (PRMT5).